A 389-amino-acid chain; its full sequence is Probable nitrate transporter NarT (389 aa).

A run of 12 helical transmembrane segments spans residues 14 to 34 (TLSL…MPFI), 45 to 65 (ISII…PFGY), 69 to 89 (IVGA…PIFF), 97 to 117 (GMLM…SVGV), 139 to 159 (GNIG…IIGW), 161 to 181 (TTVR…FIFG), 211 to 231 (WYFI…NYLV), 246 to 266 (GVFI…GDKF), 268 to 288 (AVKV…ILGI), 294 to 314 (LFTV…GLIF), 331 to 351 (IVSM…TYVA), and 353 to 373 (LTGS…IALF).

The protein belongs to the major facilitator superfamily. Nitrate/nitrite porter (TC 2.A.1.8) family.

Its subcellular location is the cell membrane. Functionally, probably required for nitrate uptake under anoxic conditions. Also possibly involved in excretion of nitrite produced by the dissimilatory reduction of nitrate. The chain is Probable nitrate transporter NarT (narT) from Staphylococcus aureus (strain MRSA252).